A 171-amino-acid chain; its full sequence is Small ribosomal subunit protein uS5 (171 aa).

An S5 DRBM domain is found at 14-77 (YIEKLVNIRR…DKARKAMKNV (64 aa)).

Belongs to the universal ribosomal protein uS5 family. As to quaternary structure, part of the 30S ribosomal subunit. Contacts proteins S4 and S8.

Functionally, with S4 and S12 plays an important role in translational accuracy. In terms of biological role, located at the back of the 30S subunit body where it stabilizes the conformation of the head with respect to the body. This chain is Small ribosomal subunit protein uS5, found in Vesicomyosocius okutanii subsp. Calyptogena okutanii (strain HA).